A 258-amino-acid chain; its full sequence is UPF0246 protein YaaA (258 aa).

It belongs to the UPF0246 family.

This Shigella sonnei (strain Ss046) protein is UPF0246 protein YaaA.